Here is a 322-residue protein sequence, read N- to C-terminus: Transaldolase (322 aa).

Lys136 functions as the Schiff-base intermediate with substrate in the catalytic mechanism.

The protein belongs to the transaldolase family. Type 1 subfamily. Homodimer.

The protein resides in the cytoplasm. It carries out the reaction D-sedoheptulose 7-phosphate + D-glyceraldehyde 3-phosphate = D-erythrose 4-phosphate + beta-D-fructose 6-phosphate. Its pathway is carbohydrate degradation; pentose phosphate pathway; D-glyceraldehyde 3-phosphate and beta-D-fructose 6-phosphate from D-ribose 5-phosphate and D-xylulose 5-phosphate (non-oxidative stage): step 2/3. Functionally, transaldolase is important for the balance of metabolites in the pentose-phosphate pathway. The polypeptide is Transaldolase (Xanthomonas euvesicatoria pv. vesicatoria (strain 85-10) (Xanthomonas campestris pv. vesicatoria)).